A 189-amino-acid polypeptide reads, in one-letter code: dCTP deaminase (189 aa).

DCTP is bound by residues 112 to 117 (KSTYAR), 136 to 138 (TLE), Q157, Y171, and Q181. E138 (proton donor/acceptor) is an active-site residue.

Belongs to the dCTP deaminase family. In terms of assembly, homotrimer.

It catalyses the reaction dCTP + H2O + H(+) = dUTP + NH4(+). It participates in pyrimidine metabolism; dUMP biosynthesis; dUMP from dCTP (dUTP route): step 1/2. Catalyzes the deamination of dCTP to dUTP. The sequence is that of dCTP deaminase from Burkholderia orbicola (strain MC0-3).